The following is a 233-amino-acid chain: Germin-like protein (233 aa).

The signal sequence occupies residues Met-1–Ala-22. Cys-32 and Cys-49 are joined by a disulfide. A Cupin type-1 domain is found at Arg-63–Ser-215. The Mn(2+) site is built by His-111, His-113, Glu-118, and His-162.

It belongs to the germin family. In terms of assembly, oligomer (believed to be a pentamer but probably hexamer). As to expression, expressed at high levels in unstressed roots.

It is found in the secreted. The protein resides in the extracellular space. It localises to the apoplast. In terms of biological role, may be involved in seed germination. The polypeptide is Germin-like protein (Mesembryanthemum crystallinum (Common ice plant)).